The primary structure comprises 388 residues: Chorismate synthase (388 aa).

R39 and R45 together coordinate NADP(+). FMN contacts are provided by residues 130 to 132, 251 to 252, G296, 311 to 315, and R337; these read RSS, NA, and KPIPT.

The protein belongs to the chorismate synthase family. As to quaternary structure, homotetramer. The cofactor is FMNH2.

The enzyme catalyses 5-O-(1-carboxyvinyl)-3-phosphoshikimate = chorismate + phosphate. It participates in metabolic intermediate biosynthesis; chorismate biosynthesis; chorismate from D-erythrose 4-phosphate and phosphoenolpyruvate: step 7/7. Functionally, catalyzes the anti-1,4-elimination of the C-3 phosphate and the C-6 proR hydrogen from 5-enolpyruvylshikimate-3-phosphate (EPSP) to yield chorismate, which is the branch point compound that serves as the starting substrate for the three terminal pathways of aromatic amino acid biosynthesis. This reaction introduces a second double bond into the aromatic ring system. The sequence is that of Chorismate synthase from Streptococcus sanguinis (strain SK36).